The sequence spans 95 residues: Small ribosomal subunit protein uS17 (95 aa).

This sequence belongs to the universal ribosomal protein uS17 family. As to quaternary structure, part of the 30S ribosomal subunit.

One of the primary rRNA binding proteins, it binds specifically to the 5'-end of 16S ribosomal RNA. This chain is Small ribosomal subunit protein uS17, found in Psychrobacter sp. (strain PRwf-1).